Here is a 318-residue protein sequence, read N- to C-terminus: tRNA pseudouridine synthase B (318 aa).

The active-site Nucleophile is D47.

It belongs to the pseudouridine synthase TruB family. Type 1 subfamily.

The enzyme catalyses uridine(55) in tRNA = pseudouridine(55) in tRNA. Responsible for synthesis of pseudouridine from uracil-55 in the psi GC loop of transfer RNAs. The sequence is that of tRNA pseudouridine synthase B from Colwellia psychrerythraea (strain 34H / ATCC BAA-681) (Vibrio psychroerythus).